We begin with the raw amino-acid sequence, 95 residues long: Integration host factor subunit beta (95 aa).

Positions 56 to 76 (RAPRTGRNPKTGTSVELDGKY) are disordered.

It belongs to the bacterial histone-like protein family. As to quaternary structure, heterodimer of an alpha and a beta chain.

This protein is one of the two subunits of integration host factor, a specific DNA-binding protein that functions in genetic recombination as well as in transcriptional and translational control. In Shewanella denitrificans (strain OS217 / ATCC BAA-1090 / DSM 15013), this protein is Integration host factor subunit beta.